The sequence spans 267 residues: MEMO1 family protein MM_1761 (267 aa).

Belongs to the MEMO1 family.

This Methanosarcina mazei (strain ATCC BAA-159 / DSM 3647 / Goe1 / Go1 / JCM 11833 / OCM 88) (Methanosarcina frisia) protein is MEMO1 family protein MM_1761.